A 489-amino-acid polypeptide reads, in one-letter code: Dihydropyrimidinase 1 (489 aa).

Residues His-61, His-63, and Lys-156 each contribute to the Zn(2+) site. At Lys-156 the chain carries N6-carboxylysine. Tyr-161 is a substrate binding site. Zn(2+)-binding residues include His-189 and His-245. Substrate is bound at residue Ser-295. Zn(2+) is bound at residue Asp-323. Residue Asn-344 participates in substrate binding.

The protein belongs to the metallo-dependent hydrolases superfamily. Hydantoinase/dihydropyrimidinase family. In terms of assembly, homotetramer. Requires Zn(2+) as cofactor. Post-translationally, carboxylation allows a single lysine to coordinate two zinc ions.

The protein resides in the nucleus. The catalysed reaction is 5,6-dihydrouracil + H2O = 3-(carbamoylamino)propanoate + H(+). This Caenorhabditis briggsae protein is Dihydropyrimidinase 1 (dhp-1).